Here is a 214-residue protein sequence, read N- to C-terminus: Probable nicotinate-nucleotide adenylyltransferase (214 aa).

This sequence belongs to the NadD family.

It carries out the reaction nicotinate beta-D-ribonucleotide + ATP + H(+) = deamido-NAD(+) + diphosphate. It functions in the pathway cofactor biosynthesis; NAD(+) biosynthesis; deamido-NAD(+) from nicotinate D-ribonucleotide: step 1/1. Catalyzes the reversible adenylation of nicotinate mononucleotide (NaMN) to nicotinic acid adenine dinucleotide (NaAD). The chain is Probable nicotinate-nucleotide adenylyltransferase from Rhodopirellula baltica (strain DSM 10527 / NCIMB 13988 / SH1).